Consider the following 376-residue polypeptide: MAKRDYYEVLGVNRDASDNEIKKAYRKLAMKHHPDRNPDNKDSEDHFKEAKNAYEILSDAQKRAAYDRYGHAGVDPSAGAGPGGQGFDGFADAFSDIFGDIFGGAGGAGRGRSNVYRGADLRYNLEISLEEAARGADKTIRIPTVEECETCHGSGAKPGTQPKPCPTCGGAGQVRIQQGFFSIQQTCPKCHGTGRIIPDPCRDCGGAGRVKRQKTLEVKIPAGIDEGMRLRHAGHGEPGVNGGPPGDLYVEIHIRAHPVFQRDHDDLHCEMPISITTAALGGEIEIPTLEGMARLKIPAETQSGKVFRLRGKGIRNVRSQAHGDLMCHVVVETPVNLTERQKELLREFEEVSSSDADRHNPKAKSWMDKVKDFFGA.

Residues 5-70 enclose the J domain; the sequence is DYYEVLGVNR…QKRAAYDRYG (66 aa). The segment at 135–213 adopts a CR-type zinc-finger fold; the sequence is GADKTIRIPT…CGGAGRVKRQ (79 aa). Zn(2+)-binding residues include Cys-148, Cys-151, Cys-165, Cys-168, Cys-187, Cys-190, Cys-201, and Cys-204. CXXCXGXG motif repeat units lie at residues 148 to 155, 165 to 172, 187 to 194, and 201 to 208; these read CETCHGSG, CPTCGGAG, CPKCHGTG, and CRDCGGAG.

It belongs to the DnaJ family. Homodimer. The cofactor is Zn(2+).

Its subcellular location is the cytoplasm. In terms of biological role, participates actively in the response to hyperosmotic and heat shock by preventing the aggregation of stress-denatured proteins and by disaggregating proteins, also in an autonomous, DnaK-independent fashion. Unfolded proteins bind initially to DnaJ; upon interaction with the DnaJ-bound protein, DnaK hydrolyzes its bound ATP, resulting in the formation of a stable complex. GrpE releases ADP from DnaK; ATP binding to DnaK triggers the release of the substrate protein, thus completing the reaction cycle. Several rounds of ATP-dependent interactions between DnaJ, DnaK and GrpE are required for fully efficient folding. Also involved, together with DnaK and GrpE, in the DNA replication of plasmids through activation of initiation proteins. This is Chaperone protein DnaJ 2 from Aromatoleum aromaticum (strain DSM 19018 / LMG 30748 / EbN1) (Azoarcus sp. (strain EbN1)).